The primary structure comprises 214 residues: MRISLILVFIGPPGSGKGTQASLLSEKFSIISVGKVLRTVMESNTAEADVVKKFIKSGKLVPSNITNKIVVNALKNIDQCKSIILDGYPRDIFQADFLQENLQMDFKVLFFDIDDAVVLRRLSGRISCTDCGTIYNKLYCMPKINGVCDICNSSSFQNRVDDDESIIKLRLESYKKETLPLLEFYKAQDKLTLIDANQSTENILKKIKKISGIY.

14–19 is a binding site for ATP; sequence GSGKGT. An NMP region spans residues 32–61; that stretch reads SVGKVLRTVMESNTAEADVVKKFIKSGKLV. Residues Arg38, 59–61, 87–90, and Gln94 contribute to the AMP site; these read KLV and GYPR. An LID region spans residues 124 to 162; that stretch reads GRISCTDCGTIYNKLYCMPKINGVCDICNSSSFQNRVDD. Arg125 contacts ATP. Zn(2+) contacts are provided by Cys128 and Cys131. Residue 134–135 participates in ATP binding; it reads IY. Residues Cys148 and Cys151 each coordinate Zn(2+). Residues Arg159 and Arg170 each coordinate AMP. Residue Gln198 coordinates ATP.

It belongs to the adenylate kinase family. In terms of assembly, monomer.

It is found in the cytoplasm. The catalysed reaction is AMP + ATP = 2 ADP. It participates in purine metabolism; AMP biosynthesis via salvage pathway; AMP from ADP: step 1/1. Its function is as follows. Catalyzes the reversible transfer of the terminal phosphate group between ATP and AMP. Plays an important role in cellular energy homeostasis and in adenine nucleotide metabolism. This chain is Adenylate kinase, found in Orientia tsutsugamushi (strain Ikeda) (Rickettsia tsutsugamushi).